We begin with the raw amino-acid sequence, 92 residues long: Sec-independent protein translocase protein TatA (92 aa).

A helical transmembrane segment spans residues 1 to 21 (MGIFDWKHWIVILVVVVLVFG). A disordered region spans residues 43–92 (MNDDEKPADPTVTPAQPVPPVQPQATAQANPPHTIDVQAQKVEEPIRKDV). The span at 65-74 (PQATAQANPP) shows a compositional bias: low complexity. The span at 83-92 (KVEEPIRKDV) shows a compositional bias: basic and acidic residues.

Belongs to the TatA/E family. The Tat system comprises two distinct complexes: a TatABC complex, containing multiple copies of TatA, TatB and TatC subunits, and a separate TatA complex, containing only TatA subunits. Substrates initially bind to the TatABC complex, which probably triggers association of the separate TatA complex to form the active translocon.

It is found in the cell inner membrane. Functionally, part of the twin-arginine translocation (Tat) system that transports large folded proteins containing a characteristic twin-arginine motif in their signal peptide across membranes. TatA could form the protein-conducting channel of the Tat system. In Pseudomonas fluorescens (strain Pf0-1), this protein is Sec-independent protein translocase protein TatA.